The chain runs to 173 residues: Myosin light chain 5 (173 aa).

Residues 1-20 (MASRKTKKKEGGALRAQRAS) form a disordered region. EF-hand domains are found at residues 30–65 (TQIQEFKEAFTLMDQNRDGFIDKEDLKDTYASLGKT), 100–135 (DAEETILNAFKMLDPDGKGKINKEYIKRLLMSQADK), and 136–171 (MTAEEVDQMFQFASIDVAGNLDYKALSYVITHGEEK). Aspartate 43, asparagine 45, aspartate 47, and aspartate 54 together coordinate Ca(2+).

As to quaternary structure, myosin is a hexamer of 2 heavy chains and 4 light chains. As to expression, expressed in fetal skeletal muscle and retina.

The chain is Myosin light chain 5 (MYL5) from Homo sapiens (Human).